The primary structure comprises 259 residues: BTB/POZ domain-containing protein KCTD4 (259 aa).

The segment at 1–22 (MEHKINRREKEKDYEGKHNSLE) is disordered. Residues 33–134 (TLMTLNVGGY…EVKSRWEKEQ (102 aa)) form the BTB domain.

This Bos taurus (Bovine) protein is BTB/POZ domain-containing protein KCTD4 (KCTD4).